We begin with the raw amino-acid sequence, 433 residues long: Ribosome biogenesis protein WDR12 homolog (433 aa).

Residues 21 to 102 are ubiquitin-like (UBL) domain; that stretch reads VEVFVVSYRH…ESVISIECIV (82 aa). 7 WD repeats span residues 114–151, 153–194, 203–242, 270–310, 312–351, 357–397, and 401–433; these read ALLD…LTSS, LHEE…SSTF, GHER…TSTV, GHKD…QINT, AAKK…GTLV, GHCG…TPLY, and GHSD…RRKM.

The protein belongs to the WD repeat WDR12/YTM1 family.

It localises to the nucleus. Its subcellular location is the nucleolus. It is found in the nucleoplasm. Required for maturation of ribosomal RNAs and formation of the large ribosomal subunit. The polypeptide is Ribosome biogenesis protein WDR12 homolog (Brugia malayi (Filarial nematode worm)).